A 541-amino-acid polypeptide reads, in one-letter code: Testis-specific chromodomain protein Y 2 (541 aa).

A Chromo domain is found at 6-66 (FEVEAIVDKR…RQTEKQKKLT (61 aa)). Residues 72 to 104 (RIFSNNARRRTSRSTKANYSKNSPKTPVTDKHH) form a disordered region. The segment covering 87–97 (KANYSKNSPKT) has biased composition (polar residues).

Testis specific.

The protein localises to the nucleus. It catalyses the reaction L-lysyl-[protein] + acetyl-CoA = N(6)-acetyl-L-lysyl-[protein] + CoA + H(+). In terms of biological role, may have histone acetyltransferase activity. This Homo sapiens (Human) protein is Testis-specific chromodomain protein Y 2 (CDY2A).